The primary structure comprises 211 residues: Large ribosomal subunit protein eL13 (211 aa).

N6-acetyllysine is present on Lys16. A phosphoserine mark is found at Ser52, Ser77, and Ser106. Glycyl lysine isopeptide (Lys-Gly) (interchain with G-Cter in SUMO2) cross-links involve residues Lys123 and Lys145. Lys174 is covalently cross-linked (Glycyl lysine isopeptide (Lys-Gly) (interchain with G-Cter in SUMO1); alternate). Glycyl lysine isopeptide (Lys-Gly) (interchain with G-Cter in SUMO2); alternate cross-links involve residues Lys174 and Lys177. Lys177 carries the post-translational modification N6-acetyllysine; alternate.

Belongs to the eukaryotic ribosomal protein eL13 family. As to quaternary structure, component of the 60S large ribosomal subunit (LSU).

The protein resides in the cytoplasm. In terms of biological role, component of the ribosome, a large ribonucleoprotein complex responsible for the synthesis of proteins in the cell. The small ribosomal subunit (SSU) binds messenger RNAs (mRNAs) and translates the encoded message by selecting cognate aminoacyl-transfer RNA (tRNA) molecules. The large subunit (LSU) contains the ribosomal catalytic site termed the peptidyl transferase center (PTC), which catalyzes the formation of peptide bonds, thereby polymerizing the amino acids delivered by tRNAs into a polypeptide chain. The nascent polypeptides leave the ribosome through a tunnel in the LSU and interact with protein factors that function in enzymatic processing, targeting, and the membrane insertion of nascent chains at the exit of the ribosomal tunnel. As part of the LSU, it is probably required for its formation and the maturation of rRNAs. Plays a role in bone development. The protein is Large ribosomal subunit protein eL13 (RPL13) of Cricetulus griseus (Chinese hamster).